Reading from the N-terminus, the 353-residue chain is Rhodopsin (353 aa).

Over 1–36 the chain is Extracellular; it reads MNGTEGPYFYIPMLNTTGIVRSPYEYPQYYLVNPAA. Asn-2 and Asn-15 each carry an N-linked (GlcNAc...) asparagine glycan. Residues 37-61 form a helical membrane-spanning segment; that stretch reads YAALCAYMFLLILLGFPINFLTLYV. The Cytoplasmic portion of the chain corresponds to 62–73; sequence TIEHKKLRTPLN. A helical transmembrane segment spans residues 74 to 96; the sequence is YILLNLAVANLFMVFGGFTTTMY. Over 97–110 the chain is Extracellular; sequence TSMHGYFVLGRLGC. Cys-110 and Cys-187 are joined by a disulfide. The helical transmembrane segment at 111 to 133 threads the bilayer; it reads NLEGFFATLGGEIGLWSLVVLAV. Positions 134–136 match the 'Ionic lock' involved in activated form stabilization motif; sequence ERW. Residues 134–152 lie on the Cytoplasmic side of the membrane; it reads ERWMVVCKPISNFRFTENH. Residues 153 to 173 traverse the membrane as a helical segment; that stretch reads AIMGLGFTWFAASACAVPPLV. The Extracellular segment spans residues 174–202; it reads GWSRYIPEGMQCSCGVDYYTRAEGFNNES. The N-linked (GlcNAc...) asparagine glycan is linked to Asn-200. A helical transmembrane segment spans residues 203-224; sequence FVVYMFVCHFLIPLIVVFFCYG. The Cytoplasmic segment spans residues 225–252; it reads RLLCAVKEAAAAQQESETTQRAEREVTR. The helical transmembrane segment at 253–274 threads the bilayer; it reads MVVIMVIAFLICWCPYAGVAWY. At 275–286 the chain is on the extracellular side; the sequence is IFSNQGSEFGPL. A helical membrane pass occupies residues 287–308; that stretch reads FMTIPAFFAKSSSIYNPLIYIF. Lys-296 carries the post-translational modification N6-(retinylidene)lysine. Residues 309–353 are Cytoplasmic-facing; that stretch reads MNKQFRHCMITTLCCGKNPFEEEEGSTTTSKTEASSASSSSVSPA. S-palmitoyl cysteine attachment occurs at residues Cys-322 and Cys-323. Positions 329 to 353 are disordered; it reads EEEEGSTTTSKTEASSASSSSVSPA. Residues 334 to 353 are compositionally biased toward low complexity; sequence STTTSKTEASSASSSSVSPA.

The protein belongs to the G-protein coupled receptor 1 family. Opsin subfamily. Phosphorylated on some or all of the serine and threonine residues present in the C-terminal region. Post-translationally, contains one covalently linked retinal chromophore.

It is found in the membrane. Its subcellular location is the cell projection. It localises to the cilium. The protein resides in the photoreceptor outer segment. In terms of biological role, photoreceptor required for image-forming vision at low light intensity. While most salt water fish species use retinal as chromophore, most freshwater fish use 3-dehydroretinal, or a mixture of retinal and 3-dehydroretinal. Light-induced isomerization of 11-cis to all-trans retinal triggers a conformational change that activates signaling via G-proteins. Subsequent receptor phosphorylation mediates displacement of the bound G-protein alpha subunit by arrestin and terminates signaling. The chain is Rhodopsin (rho) from Solea solea (Common sole).